The primary structure comprises 138 residues: MEDRQKLEQMVTEINQLQQQGETITQQIEQLNQSLADITTAQEAVKGIKNATGKQTLVPIGAGCFIETELKSEDIIVGVGSDVAIKRSREETEKTLQTDKEEVQKLIGSLTEQLQKINEYIAQKRPEAERLMKETGVQ.

This sequence belongs to the prefoldin subunit alpha family. In terms of assembly, heterohexamer of two alpha and four beta subunits.

Its subcellular location is the cytoplasm. Its function is as follows. Molecular chaperone capable of stabilizing a range of proteins. Seems to fulfill an ATP-independent, HSP70-like function in archaeal de novo protein folding. The chain is Prefoldin subunit alpha from Methanosphaera stadtmanae (strain ATCC 43021 / DSM 3091 / JCM 11832 / MCB-3).